The following is a 370-amino-acid chain: Ig heavy chain C region (370 aa).

3 Ig-like domains span residues 40-134, 145-237, and 247-347; these read PTVI…RNIT, PAIK…DSIH, and PSVS…RTVN. N-linked (GlcNAc...) asparagine glycosylation is found at Asn-98, Asn-132, Asn-177, Asn-343, Asn-347, and Asn-357.

The sequence is that of Ig heavy chain C region from Heterodontus francisci (Horn shark).